Here is a 1025-residue protein sequence, read N- to C-terminus: RNA cytidine acetyltransferase (1025 aa).

Position 287–296 (287–296 (GRGKSAALGL)) interacts with ATP. Lys426 is subject to N6-acetyllysine. Residue Arg470 participates in ATP binding. The N-acetyltransferase domain maps to 558-753 (CLLPPVPPTQ…HSCIMLKTLT (196 aa)). Acetyl-CoA contacts are provided by residues 629–631 (IAV) and 636–642 (QGMGYGS). Residues 702 to 1025 (PAERLDYLGV…KKDMKLKRKK (324 aa)) form a required for localization to the nucleolus and midbody region. The residue at position 716 (Thr716) is a Phosphothreonine. Arg725 is an acetyl-CoA binding site. Residues Ser934, Ser984, and Ser987 each carry the phosphoserine modification. A disordered region spans residues 990-1025 (SDKKRKLEAKQEPKQSKKLKNRETKNKKDMKLKRKK). Residues 997 to 1018 (EAKQEPKQSKKLKNRETKNKKD) are compositionally biased toward basic and acidic residues.

This sequence belongs to the RNA cytidine acetyltransferase family. NAT10 subfamily. Part of the small subunit (SSU) processome, composed of more than 70 proteins and the RNA chaperone small nucleolar RNA (snoRNA) U3. Interacts with THUMPD1. Interacts with SUN1 (via N-terminus). Interacts with TERT. Post-translationally, acetylation at Lys-426 is required to activation of rRNA transcription. May be autoacetylated; however ability to autoacetylate in vivo requires additional evidences.

It is found in the nucleus. Its subcellular location is the nucleolus. The protein resides in the midbody. It catalyses the reaction a cytidine in 18S rRNA + acetyl-CoA + ATP + H2O = an N(4)-acetylcytidine in 18S rRNA + ADP + phosphate + CoA + H(+). The enzyme catalyses a cytidine in tRNA + acetyl-CoA + ATP + H2O = an N(4)-acetylcytidine in tRNA + ADP + phosphate + CoA + H(+). The catalysed reaction is a cytidine in mRNA + acetyl-CoA + ATP + H2O = an N(4)-acetylcytidine in mRNA + ADP + phosphate + CoA + H(+). Specifically inhibited by remodelin (4-[2-(2-cyclopentylidenehydrazinyl)-4-thiazolyl]-benzonitrile, monohydrobromide), a hydrobromide salt molecule. Remodelin can improve nuclear architecture, chromatin organization and fitness of cells from patients suffering from Hutchinson-Gilford progeria syndrome (HGPS); molecular mechanisms explaining the relation between NAT10 activity and nuclear architecture are however unclear. RNA cytidine acetyltransferase that catalyzes the formation of N(4)-acetylcytidine (ac4C) modification on mRNAs, 18S rRNA and tRNAs. Catalyzes ac4C modification of a broad range of mRNAs, enhancing mRNA stability and translation. mRNA ac4C modification is frequently present within wobble cytidine sites and promotes translation efficiency. Mediates the formation of ac4C at position 1842 in 18S rRNA. May also catalyze the formation of ac4C at position 1337 in 18S rRNA. Required for early nucleolar cleavages of precursor rRNA at sites A0, A1 and A2 during 18S rRNA synthesis. Catalyzes the formation of ac4C in serine and leucine tRNAs. Requires the tRNA-binding adapter protein THUMPD1 for full tRNA acetyltransferase activity but not for 18S rRNA acetylation. In addition to RNA acetyltransferase activity, also able to acetylate lysine residues of proteins, such as histones, microtubules, p53/TP53 and MDM2, in vitro. The relevance of the protein lysine acetyltransferase activity is however unsure in vivo. Activates telomerase activity by stimulating the transcription of TERT, and may also regulate telomerase function by affecting the balance of telomerase subunit assembly, disassembly, and localization. Involved in the regulation of centrosome duplication by acetylating CENATAC during mitosis, promoting SASS6 proteasome degradation. Part of the small subunit (SSU) processome, first precursor of the small eukaryotic ribosomal subunit. During the assembly of the SSU processome in the nucleolus, many ribosome biogenesis factors, an RNA chaperone and ribosomal proteins associate with the nascent pre-rRNA and work in concert to generate RNA folding, modifications, rearrangements and cleavage as well as targeted degradation of pre-ribosomal RNA by the RNA exosome. This chain is RNA cytidine acetyltransferase, found in Homo sapiens (Human).